Reading from the N-terminus, the 547-residue chain is Putative HMP/thiamine import ATP-binding protein YkoD (547 aa).

ABC transporter domains follow at residues 8 to 250 and 295 to 523; these read LTVE…KLGI and LEVS…KAKL. ATP contacts are provided by residues 42–49 and 327–334; these read GPSGCGKS and GPNGTGKS.

It belongs to the ABC transporter superfamily. As to quaternary structure, the complex is composed of two ATP-binding proteins (YkoD), two transmembrane proteins (YkoC and YkoE) and a solute-binding protein (YkoF).

It localises to the cell membrane. Its function is as follows. Part of the ABC transporter complex YkoCDEF that could transport hydroxymethylpyrimidine (HMP) and/or thiamine. Could also transport other HMP-containing products. Responsible for energy coupling to the transport system. This is Putative HMP/thiamine import ATP-binding protein YkoD (ykoD) from Bacillus subtilis (strain 168).